A 208-amino-acid polypeptide reads, in one-letter code: Glycerol-3-phosphate acyltransferase (208 aa).

The next 5 helical transmembrane spans lie at 3 to 23 (IIIMLIIAYLIGAIPSGVIIG), 55 to 75 (IVMVMDILKGTIAALQPTLLF), 81 to 101 (YTLLIGLAAILGHTFSIYIGF), 113 to 133 (ILLAYNWEFFLIASAIMLLLV), and 155 to 175 (IFYYQDWLLSLVAFALTLFIF).

This sequence belongs to the PlsY family. Probably interacts with PlsX.

The protein resides in the cell membrane. It carries out the reaction an acyl phosphate + sn-glycerol 3-phosphate = a 1-acyl-sn-glycero-3-phosphate + phosphate. The protein operates within lipid metabolism; phospholipid metabolism. Its function is as follows. Catalyzes the transfer of an acyl group from acyl-phosphate (acyl-PO(4)) to glycerol-3-phosphate (G3P) to form lysophosphatidic acid (LPA). This enzyme utilizes acyl-phosphate as fatty acyl donor, but not acyl-CoA or acyl-ACP. The chain is Glycerol-3-phosphate acyltransferase from Lactiplantibacillus plantarum (strain ATCC BAA-793 / NCIMB 8826 / WCFS1) (Lactobacillus plantarum).